Reading from the N-terminus, the 149-residue chain is Calmodulin (149 aa).

A2 is modified (N-acetylalanine). 4 EF-hand domains span residues E8–N43, P44–D79, D81–K116, and L117–K149. D21, D23, D25, T27, E32, D57, D59, N61, T63, E68, D94, D96, N98, and E105 together coordinate Ca(2+). Position 116 is an N6,N6,N6-trimethyllysine (K116). Positions 130, 132, 134, 136, and 141 each coordinate Ca(2+).

It belongs to the calmodulin family. As to quaternary structure, interacts (in the presence of Ca(2+)) with pde-1, madf-3, rpl-7A, tax-6, efk-1, npp-1, obr-4, sos-1, akt-1, unc-13, tag-196, ugt-48, nmy-2, F27D4.4, ddx-23, efa-6 and R11H6.4.

In terms of biological role, calmodulin mediates the control of a large number of enzymes, ion channels and other proteins by Ca(2+). Among the enzymes to be stimulated by the calmodulin-Ca(2+) complex are a number of protein kinases and phosphatases. The chain is Calmodulin (cmd-1) from Caenorhabditis elegans.